Here is a 310-residue protein sequence, read N- to C-terminus: Putative type II methyltransferase M.MJ0563P (310 aa).

The SAM-dependent MTase C5-type domain maps to 1 to 310; it reads MNVIDLFSGC…AIAKEIKKQL (310 aa). Cysteine 77 is an active-site residue.

It belongs to the class I-like SAM-binding methyltransferase superfamily. C5-methyltransferase family.

The catalysed reaction is a 2'-deoxycytidine in DNA + S-adenosyl-L-methionine = a 5-methyl-2'-deoxycytidine in DNA + S-adenosyl-L-homocysteine + H(+). Functionally, a putative methylase that may protect DNA from cleavage by an unknown endonuclease. This chain is Putative type II methyltransferase M.MJ0563P, found in Methanocaldococcus jannaschii (strain ATCC 43067 / DSM 2661 / JAL-1 / JCM 10045 / NBRC 100440) (Methanococcus jannaschii).